Reading from the N-terminus, the 142-residue chain is Hemoglobin subunit alpha (142 aa).

The region spanning 2–142 (VLSAADKTNV…VSTVLTSKYR (141 aa)) is the Globin domain. Phosphoserine is present on serine 4. An N6-succinyllysine modification is found at lysine 8. Threonine 9 bears the Phosphothreonine mark. The residue at position 12 (lysine 12) is an N6-succinyllysine. Lysine 17 carries the N6-acetyllysine; alternate modification. Lysine 17 is modified (N6-succinyllysine; alternate). Lysine 41 bears the N6-succinyllysine mark. Residue serine 50 is modified to Phosphoserine. Residue histidine 59 participates in O2 binding. Histidine 88 contacts heme b. Phosphoserine is present on serine 103. At threonine 109 the chain carries Phosphothreonine. 2 positions are modified to phosphoserine: serine 125 and serine 132. Threonine 135 and threonine 138 each carry phosphothreonine. At serine 139 the chain carries Phosphoserine.

The protein belongs to the globin family. Heterotetramer of two alpha chains and two beta chains. As to expression, red blood cells.

Involved in oxygen transport from the lung to the various peripheral tissues. Functionally, hemopressin acts as an antagonist peptide of the cannabinoid receptor CNR1. Hemopressin-binding efficiently blocks cannabinoid receptor CNR1 and subsequent signaling. The polypeptide is Hemoglobin subunit alpha (HBA) (Equus przewalskii (Przewalski's horse)).